The chain runs to 449 residues: MDVLGWLLLPLLLLCTQPHHGARAMNDIGDYVGSNLEISWLPNLDGLMEGYARNFRPGIGGAPVNVALALEVASIDHISEANMEYTMTVFLHQSWRDSRLSYNHTNETLGLDSRFVDKLWLPDTFIVNAKSAWFHDVTVENKLIRLQPDGVILYSIRITSTVACDMDLAKYPLDEQECMLDLESYGYSSEDIVYYWSENQEQIHGLDRLQLAQFTITSYRFTTELMNFKSAGQFPRLSLHFQLRRNRGVYIIQSYMPSVLLVAMSWVSFWISQAAVPARVSLGITTVLTMTTLMVSARSSLPRASAIKALDVYFWICYVFVFAALVEYAFAHFNADYRKKRKAKVKVTKPRAEMDVRNAIVLFSLSAAGVSQELAISRRQGRVPGNLMGSYRSVEVEAKKEGGSRPGGPGGIRSRLKPIDADTIDIYARAVFPAAFAAVNIIYWAAYTM.

The signal sequence occupies residues 1–24 (MDVLGWLLLPLLLLCTQPHHGARA). Residues 25–251 (MNDIGDYVGS…QLRRNRGVYI (227 aa)) are Extracellular-facing. Asn103 and Asn106 each carry an N-linked (GlcNAc...) asparagine glycan. Cys164 and Cys178 are joined by a disulfide. A helical membrane pass occupies residues 252–271 (IQSYMPSVLLVAMSWVSFWI). Over 272-275 (SQAA) the chain is Cytoplasmic. The helical transmembrane segment at 276–298 (VPARVSLGITTVLTMTTLMVSAR) threads the bilayer. The Extracellular portion of the chain corresponds to 299-308 (SSLPRASAIK). Residues 309 to 331 (ALDVYFWICYVFVFAALVEYAFA) traverse the membrane as a helical segment. At 332–423 (HFNADYRKKR…SRLKPIDADT (92 aa)) the chain is on the cytoplasmic side. At Ser390 the chain carries Phosphoserine. The chain crosses the membrane as a helical span at residues 424–446 (IDIYARAVFPAAFAAVNIIYWAA). The Extracellular segment spans residues 447-449 (YTM).

It belongs to the ligand-gated ion channel (TC 1.A.9) family. Gamma-aminobutyric acid receptor (TC 1.A.9.5) subfamily. GABRD sub-subfamily. Heteropentamer, formed by a combination of alpha (GABRA1-6), beta (GABRB1-3), gamma (GABRG1-3), delta (GABRD), epsilon (GABRE), rho (GABRR1-3), pi (GABRP) and theta (GABRQ) chains, each subunit exhibiting distinct physiological and pharmacological properties.

The protein resides in the cell membrane. The enzyme catalyses chloride(in) = chloride(out). Functionally, delta subunit of the heteropentameric ligand-gated chloride channel gated by gamma-aminobutyric acid (GABA), a major inhibitory neurotransmitter in the brain. GABA-gated chloride channels, also named GABA(A) receptors (GABAAR), consist of five subunits arranged around a central pore and contain GABA active binding site(s) located at the alpha and beta subunit interface(s). When activated by GABA, GABAARs selectively allow the flow of chloride anions across the cell membrane down their electrochemical gradient. GABAARs containing delta/GABRD subunits are predominantly expressed and located in extrasynaptic or perisynaptic positions on hippocampus and cerebellar granule cells, and contribute to the tonic GABAergic inhibition. GABAAR containing alpha-4-beta-3-delta subunits can simultaneously bind GABA and histamine where histamine binds at the interface of two neighboring beta subunits, which may be involved in the regulation of sleep and wakefulness. The polypeptide is Gamma-aminobutyric acid receptor subunit delta (Mus musculus (Mouse)).